A 267-amino-acid polypeptide reads, in one-letter code: Undecaprenyl-diphosphatase (267 aa).

7 consecutive transmembrane segments (helical) span residues 4–24 (LYAL…ISST), 41–61 (FWKS…IFVF), 69–89 (LDIW…GLFV), 96–116 (LFNG…FILI), 173–193 (AAEF…AYSI), 207–227 (IPLG…IKFF), and 239–259 (FGIY…SGIL).

It belongs to the UppP family.

The protein resides in the cell inner membrane. It carries out the reaction di-trans,octa-cis-undecaprenyl diphosphate + H2O = di-trans,octa-cis-undecaprenyl phosphate + phosphate + H(+). Functionally, catalyzes the dephosphorylation of undecaprenyl diphosphate (UPP). Confers resistance to bacitracin. The polypeptide is Undecaprenyl-diphosphatase (Campylobacter jejuni subsp. jejuni serotype O:2 (strain ATCC 700819 / NCTC 11168)).